A 371-amino-acid chain; its full sequence is Bifunctional enzyme IspD/IspF (371 aa).

The tract at residues 1–210 (MSEMSLIMLA…LNLPTPSFEI (210 aa)) is 2-C-methyl-D-erythritol 4-phosphate cytidylyltransferase. The interval 211-371 (FTGNGFDVHE…NLKYFDWTRL (161 aa)) is 2-C-methyl-D-erythritol 2,4-cyclodiphosphate synthase. A divalent metal cation contacts are provided by Asp217 and His219. Residues 217–219 (DVH) and 243–244 (HS) each bind 4-CDP-2-C-methyl-D-erythritol 2-phosphate. His251 contacts a divalent metal cation. 4-CDP-2-C-methyl-D-erythritol 2-phosphate-binding positions include 265–267 (DIG), 270–274 (YPDTD), 341–344 (TTTE), Phe348, and Arg351.

The protein in the N-terminal section; belongs to the IspD/TarI cytidylyltransferase family. IspD subfamily. This sequence in the C-terminal section; belongs to the IspF family. It depends on a divalent metal cation as a cofactor.

The catalysed reaction is 2-C-methyl-D-erythritol 4-phosphate + CTP + H(+) = 4-CDP-2-C-methyl-D-erythritol + diphosphate. It carries out the reaction 4-CDP-2-C-methyl-D-erythritol 2-phosphate = 2-C-methyl-D-erythritol 2,4-cyclic diphosphate + CMP. It functions in the pathway isoprenoid biosynthesis; isopentenyl diphosphate biosynthesis via DXP pathway; isopentenyl diphosphate from 1-deoxy-D-xylulose 5-phosphate: step 2/6. The protein operates within isoprenoid biosynthesis; isopentenyl diphosphate biosynthesis via DXP pathway; isopentenyl diphosphate from 1-deoxy-D-xylulose 5-phosphate: step 4/6. Functionally, bifunctional enzyme that catalyzes the formation of 4-diphosphocytidyl-2-C-methyl-D-erythritol from CTP and 2-C-methyl-D-erythritol 4-phosphate (MEP) (IspD), and catalyzes the conversion of 4-diphosphocytidyl-2-C-methyl-D-erythritol 2-phosphate (CDP-ME2P) to 2-C-methyl-D-erythritol 2,4-cyclodiphosphate (ME-CPP) with a corresponding release of cytidine 5-monophosphate (CMP) (IspF). The sequence is that of Bifunctional enzyme IspD/IspF from Campylobacter jejuni (strain RM1221).